The chain runs to 138 residues: Large-conductance mechanosensitive channel (138 aa).

The next 3 membrane-spanning stretches (helical) occupy residues 15-35, 38-58, and 80-100; these read VDLA…NSVV, IFMP…MFIQ, and GNFI…FFLV.

Belongs to the MscL family. As to quaternary structure, homopentamer.

It localises to the cell inner membrane. Its function is as follows. Channel that opens in response to stretch forces in the membrane lipid bilayer. May participate in the regulation of osmotic pressure changes within the cell. This Bartonella bacilliformis (strain ATCC 35685 / KC583 / Herrer 020/F12,63) protein is Large-conductance mechanosensitive channel.